The primary structure comprises 311 residues: Ketoisovalerate oxidoreductase subunit VorB (311 aa).

Heterotetramer of one alpha, one beta, one delta and one gamma chain.

It catalyses the reaction 3-methyl-2-oxobutanoate + 2 oxidized [2Fe-2S]-[ferredoxin] + CoA = 2-methylpropanoyl-CoA + 2 reduced [2Fe-2S]-[ferredoxin] + CO2 + H(+). This is Ketoisovalerate oxidoreductase subunit VorB (vorB) from Pyrococcus furiosus (strain ATCC 43587 / DSM 3638 / JCM 8422 / Vc1).